The chain runs to 252 residues: Aspartate/glutamate leucyltransferase (252 aa).

The protein belongs to the R-transferase family. Bpt subfamily.

It is found in the cytoplasm. The enzyme catalyses N-terminal L-glutamyl-[protein] + L-leucyl-tRNA(Leu) = N-terminal L-leucyl-L-glutamyl-[protein] + tRNA(Leu) + H(+). The catalysed reaction is N-terminal L-aspartyl-[protein] + L-leucyl-tRNA(Leu) = N-terminal L-leucyl-L-aspartyl-[protein] + tRNA(Leu) + H(+). Functions in the N-end rule pathway of protein degradation where it conjugates Leu from its aminoacyl-tRNA to the N-termini of proteins containing an N-terminal aspartate or glutamate. In Xanthomonas campestris pv. campestris (strain B100), this protein is Aspartate/glutamate leucyltransferase.